We begin with the raw amino-acid sequence, 470 residues long: ATP synthase subunit beta (470 aa).

156–163 (GGAGVGKT) provides a ligand contact to ATP.

This sequence belongs to the ATPase alpha/beta chains family. F-type ATPases have 2 components, CF(1) - the catalytic core - and CF(0) - the membrane proton channel. CF(1) has five subunits: alpha(3), beta(3), gamma(1), delta(1), epsilon(1). CF(0) has three main subunits: a(1), b(2) and c(9-12). The alpha and beta chains form an alternating ring which encloses part of the gamma chain. CF(1) is attached to CF(0) by a central stalk formed by the gamma and epsilon chains, while a peripheral stalk is formed by the delta and b chains.

It is found in the cell inner membrane. The catalysed reaction is ATP + H2O + 4 H(+)(in) = ADP + phosphate + 5 H(+)(out). Produces ATP from ADP in the presence of a proton gradient across the membrane. The catalytic sites are hosted primarily by the beta subunits. This chain is ATP synthase subunit beta, found in Thermosipho africanus (strain TCF52B).